A 207-amino-acid chain; its full sequence is MDEERLSDNVRLYKGGSIRQGLRSFAAVYVLLALSFLLLTLLSSVSLARIAALSSKLSTLQSEPKHNFSSRDSLLFPCGAQSRQWEYFEGRCYYFSLSRMSWHKAKAECEEMHSHLIIIDSYAKQNFVMFRTRNERFWIGLTDENQEGEWQWVDGTDTRSSFTFWKEGEPNNRGFNEDCAHVWTSGQWNDVYCTYECYYVCEKPLPK.

Residue Met-1 is modified to N-acetylmethionine. Residues 1 to 23 (MDEERLSDNVRLYKGGSIRQGLR) are Cytoplasmic-facing. Residues 24-48 (SFAAVYVLLALSFLLLTLLSSVSLA) form a helical; Signal-anchor for type II membrane protein membrane-spanning segment. Over 49–207 (RIAALSSKLS…YYVCEKPLPK (159 aa)) the chain is Extracellular. N-linked (GlcNAc...) asparagine glycosylation occurs at Asn-67. The C-type lectin domain maps to 77–203 (PCGAQSRQWE…TYECYYVCEK (127 aa)). Intrachain disulfides connect Cys-78–Cys-92, Cys-109–Cys-201, and Cys-179–Cys-193.

Some or all of the cysteines are involved in disulfide bonds.

Its subcellular location is the membrane. Hepatic lectin is a membrane receptor protein that recognizes and binds exposed N-acetylglucosamine moieties of plasma glycoproteins, thus mediating their clearance (from the circulation) and endocytosis. This is Hepatic lectin from Gallus gallus (Chicken).